The sequence spans 132 residues: Fatty acid-binding protein (132 aa).

Residues Arg-107 and 127-129 (RNY) each bind (5Z,8Z,11Z,14Z)-eicosatetraenoate. (9Z)-octadecenoate-binding positions include Arg-107 and 127 to 129 (RNY).

The protein belongs to the calycin superfamily. Fatty-acid binding protein (FABP) family.

It localises to the cytoplasm. Functionally, may play a role in the transport of fatty acids. Binds to various fatty acids but not retinoids. The chain is Fatty acid-binding protein from Schistosoma japonicum (Blood fluke).